The primary structure comprises 319 residues: Urease accessory protein UreD (319 aa).

Residues 254–273 (PDPVGSPAARRESVPAKRAE) are disordered. The segment covering 262–273 (ARRESVPAKRAE) has biased composition (basic and acidic residues).

The protein belongs to the UreD family. In terms of assembly, ureD, UreF and UreG form a complex that acts as a GTP-hydrolysis-dependent molecular chaperone, activating the urease apoprotein by helping to assemble the nickel containing metallocenter of UreC. The UreE protein probably delivers the nickel.

The protein resides in the cytoplasm. In terms of biological role, required for maturation of urease via the functional incorporation of the urease nickel metallocenter. In Frankia casuarinae (strain DSM 45818 / CECT 9043 / HFP020203 / CcI3), this protein is Urease accessory protein UreD.